Reading from the N-terminus, the 494-residue chain is Alpha-amylase A (494 aa).

The signal sequence occupies residues 1 to 18 (MFLAKSIVCLALLAVANA). Gln19 bears the Pyrrolidone carboxylic acid mark. Cys46 and Cys102 form a disulfide bridge. Residues Asn116, Arg165, and Asp174 each contribute to the Ca(2+) site. An intrachain disulfide couples Cys153 to Cys167. Position 202 (Arg202) interacts with chloride. Asp204 (nucleophile) is an active-site residue. Ca(2+) is bound at residue His208. Glu241 (proton donor) is an active-site residue. Residues Asn304 and Arg343 each contribute to the chloride site. 2 disulfides stabilise this stretch: Cys376–Cys382 and Cys448–Cys460.

The protein belongs to the glycosyl hydrolase 13 family. Monomer. Ca(2+) serves as cofactor. Requires chloride as cofactor.

It catalyses the reaction Endohydrolysis of (1-&gt;4)-alpha-D-glucosidic linkages in polysaccharides containing three or more (1-&gt;4)-alpha-linked D-glucose units.. The chain is Alpha-amylase A (Amy-p) from Drosophila melanogaster (Fruit fly).